Here is a 484-residue protein sequence, read N- to C-terminus: Ectonucleoside triphosphate diphosphohydrolase 6 (484 aa).

Residues 1–39 (MKKGIRYETSRKTSYIFQQPQHGPWQTRMRKISNHGSLR) are Cytoplasmic-facing. The chain crosses the membrane as a helical; Signal-anchor for type II membrane protein span at residues 40–60 (VAKVAYPLGLCVGVFIYVAYI). Over 61 to 484 (KWHRATATQA…SLNRQKSPAS (424 aa)) the chain is Lumenal. N220 is a glycosylation site (N-linked (GlcNAc...) asparagine). E224 (proton acceptor) is an active-site residue. N284 is a glycosylation site (N-linked (GlcNAc...) asparagine). Cystine bridges form between C325–C356 and C416–C430.

It belongs to the GDA1/CD39 NTPase family. As to quaternary structure, monomer. Ca(2+) is required as a cofactor. Requires Mg(2+) as cofactor. In terms of processing, the secreted form may be produced by intracellular processing. Post-translationally, N-glycosylated. In terms of tissue distribution, expressed in most tissues, but predominantly in heart.

The protein localises to the golgi apparatus membrane. It localises to the secreted. The protein resides in the cell membrane. The catalysed reaction is a ribonucleoside 5'-diphosphate + H2O = a ribonucleoside 5'-phosphate + phosphate + H(+). It catalyses the reaction IDP + H2O = IMP + phosphate + H(+). The enzyme catalyses GDP + H2O = GMP + phosphate + H(+). It carries out the reaction UDP + H2O = UMP + phosphate + H(+). Glycosylation does not appear to be required for enzymatic activity. In terms of biological role, catalyzes the hydrolysis of nucleoside triphosphates and diphosphates in a calcium- or magnesium-dependent manner. Has a strong preference for nucleoside diphosphates, preferentially hydrolyzes GDP, IDP, and UDP, with slower hydrolysis of CDP, ITP, GTP, CTP, ADP, and UTP and virtually no hydrolysis of ATP. The membrane bound form might support glycosylation reactions in the Golgi apparatus and, when released from cells, might catalyze the hydrolysis of extracellular nucleotides. The chain is Ectonucleoside triphosphate diphosphohydrolase 6 (ENTPD6) from Homo sapiens (Human).